The following is a 593-amino-acid chain: Chromosomal replication initiator protein DnaA (593 aa).

The tract at residues 1 to 71 is domain I, interacts with DnaA modulators; sequence MSDPCWEQCV…EIISNSDAGP (71 aa). The segment at 71–256 is domain II; the sequence is PKSLEIAVAQ…DVEGGIQHKH (186 aa). Positions 97-186 are disordered; the sequence is AVPVPDPLPS…STESSADRER (90 aa). Residues 113–124 show a composition bias toward polar residues; it reads SFQPPKGNTSAD. The segment at 257–473 is domain III, AAA+ region; the sequence is NLNTTFIFDN…GALKRVIANA (217 aa). ATP is bound by residues Gly-301, Gly-303, Lys-304, and Thr-305. Residues 474 to 593 form a domain IV, binds dsDNA region; it reads QFTQRSISVE…VKNLLRTLTT (120 aa).

Belongs to the DnaA family. Oligomerizes as a right-handed, spiral filament on DNA at oriC.

It is found in the cytoplasm. Its function is as follows. Plays an essential role in the initiation and regulation of chromosomal replication. ATP-DnaA binds to the origin of replication (oriC) to initiate formation of the DNA replication initiation complex once per cell cycle. Binds the DnaA box (a 9 base pair repeat at the origin) and separates the double-stranded (ds)DNA. Forms a right-handed helical filament on oriC DNA; dsDNA binds to the exterior of the filament while single-stranded (ss)DNA is stabiized in the filament's interior. The ATP-DnaA-oriC complex binds and stabilizes one strand of the AT-rich DNA unwinding element (DUE), permitting loading of DNA polymerase. After initiation quickly degrades to an ADP-DnaA complex that is not apt for DNA replication. Binds acidic phospholipids. The polypeptide is Chromosomal replication initiator protein DnaA (Teredinibacter turnerae (strain ATCC 39867 / T7901)).